We begin with the raw amino-acid sequence, 458 residues long: Probable asparagine--tRNA ligase, cytoplasmic (458 aa).

The protein belongs to the class-II aminoacyl-tRNA synthetase family.

It is found in the cytoplasm. It carries out the reaction tRNA(Asn) + L-asparagine + ATP = L-asparaginyl-tRNA(Asn) + AMP + diphosphate + H(+). In Enterocytozoon bieneusi (strain H348) (Microsporidian parasite), this protein is Probable asparagine--tRNA ligase, cytoplasmic.